The chain runs to 306 residues: Ribosomal RNA small subunit methyltransferase A (306 aa).

Residues asparagine 37, valine 39, glycine 64, glutamate 85, aspartate 115, and asparagine 134 each contribute to the S-adenosyl-L-methionine site.

The protein belongs to the class I-like SAM-binding methyltransferase superfamily. rRNA adenine N(6)-methyltransferase family. RsmA subfamily.

It is found in the cytoplasm. The enzyme catalyses adenosine(1518)/adenosine(1519) in 16S rRNA + 4 S-adenosyl-L-methionine = N(6)-dimethyladenosine(1518)/N(6)-dimethyladenosine(1519) in 16S rRNA + 4 S-adenosyl-L-homocysteine + 4 H(+). Functionally, specifically dimethylates two adjacent adenosines (A1518 and A1519) in the loop of a conserved hairpin near the 3'-end of 16S rRNA in the 30S particle. May play a critical role in biogenesis of 30S subunits. The protein is Ribosomal RNA small subunit methyltransferase A of Mycobacterium leprae (strain Br4923).